A 533-amino-acid polypeptide reads, in one-letter code: Bifunctional purine biosynthesis protein PurH (533 aa).

The 148-residue stretch at 1 to 148 (MDTPRPIKRA…KNHKDVTIVV (148 aa)) folds into the MGS-like domain.

It belongs to the PurH family.

The catalysed reaction is (6R)-10-formyltetrahydrofolate + 5-amino-1-(5-phospho-beta-D-ribosyl)imidazole-4-carboxamide = 5-formamido-1-(5-phospho-D-ribosyl)imidazole-4-carboxamide + (6S)-5,6,7,8-tetrahydrofolate. It catalyses the reaction IMP + H2O = 5-formamido-1-(5-phospho-D-ribosyl)imidazole-4-carboxamide. It participates in purine metabolism; IMP biosynthesis via de novo pathway; 5-formamido-1-(5-phospho-D-ribosyl)imidazole-4-carboxamide from 5-amino-1-(5-phospho-D-ribosyl)imidazole-4-carboxamide (10-formyl THF route): step 1/1. The protein operates within purine metabolism; IMP biosynthesis via de novo pathway; IMP from 5-formamido-1-(5-phospho-D-ribosyl)imidazole-4-carboxamide: step 1/1. This Colwellia psychrerythraea (strain 34H / ATCC BAA-681) (Vibrio psychroerythus) protein is Bifunctional purine biosynthesis protein PurH.